We begin with the raw amino-acid sequence, 184 residues long: Adenine phosphoribosyltransferase (184 aa).

Belongs to the purine/pyrimidine phosphoribosyltransferase family. In terms of assembly, homodimer.

The protein localises to the cytoplasm. It carries out the reaction AMP + diphosphate = 5-phospho-alpha-D-ribose 1-diphosphate + adenine. The protein operates within purine metabolism; AMP biosynthesis via salvage pathway; AMP from adenine: step 1/1. Functionally, catalyzes a salvage reaction resulting in the formation of AMP, that is energically less costly than de novo synthesis. In Myxococcus xanthus (strain DK1622), this protein is Adenine phosphoribosyltransferase.